Consider the following 353-residue polypeptide: Methylthioribose-1-phosphate isomerase (353 aa).

Residues 51 to 53, Arg-94, and Gln-199 contribute to the substrate site; that span reads RGA. Residue Asp-240 is the Proton donor of the active site. 250-251 serves as a coordination point for substrate; it reads NK.

It belongs to the eIF-2B alpha/beta/delta subunits family. MtnA subfamily. Homodimer.

The catalysed reaction is 5-(methylsulfanyl)-alpha-D-ribose 1-phosphate = 5-(methylsulfanyl)-D-ribulose 1-phosphate. It participates in amino-acid biosynthesis; L-methionine biosynthesis via salvage pathway; L-methionine from S-methyl-5-thio-alpha-D-ribose 1-phosphate: step 1/6. Catalyzes the interconversion of methylthioribose-1-phosphate (MTR-1-P) into methylthioribulose-1-phosphate (MTRu-1-P). In Bacillus pumilus (strain SAFR-032), this protein is Methylthioribose-1-phosphate isomerase.